Here is a 212-residue protein sequence, read N- to C-terminus: RNA chaperone ProQ (212 aa).

The tract at residues 107–153 (QDKAKAKRVAQAKSANPAAKTAKKPVKKPVAKRPKPAQSSKPAKEPV) is disordered. Residues 117–126 (QAKSANPAAK) are compositionally biased toward low complexity. Residues 127–141 (TAKKPVKKPVAKRPK) are compositionally biased toward basic residues.

This sequence belongs to the ProQ family.

The protein localises to the cytoplasm. In terms of biological role, RNA chaperone with significant RNA binding, RNA strand exchange and RNA duplexing activities. This chain is RNA chaperone ProQ, found in Shewanella pealeana (strain ATCC 700345 / ANG-SQ1).